We begin with the raw amino-acid sequence, 551 residues long: Medium/long-chain-fatty-acid--CoA/3-oxocholest-4-en-26-oate--CoA ligase (551 aa).

ATP-binding positions include 172 to 180 (TGGTTGFPK), D417, R432, and K523.

This sequence belongs to the ATP-dependent AMP-binding enzyme family.

The catalysed reaction is a medium-chain fatty acid + ATP + CoA = a medium-chain fatty acyl-CoA + AMP + diphosphate. The enzyme catalyses a long-chain fatty acid + ATP + CoA = a long-chain fatty acyl-CoA + AMP + diphosphate. It carries out the reaction (25S)-3-oxocholest-4-en-26-oate + ATP + CoA = (25S)-3-oxocholest-4-en-26-oyl-CoA + AMP + diphosphate. The protein operates within lipid metabolism; fatty acid biosynthesis. Its pathway is steroid metabolism; cholesterol metabolism. Its function is as follows. Plays an essential role in degradation of the side chains of C-24 branched-chain sterols. Not essential for degradation of straight chain sterols such as cholesterol. Catalyzes the activation of medium/long-chain fatty acids as acyl-coenzyme A (acyl-CoA), which are then transferred to the multifunctional polyketide synthase (PKS) type III for further chain extension. May be involved in the degradation of cholesterol via the degradation of the side chains of C-24 branched-chain sterols. This is Medium/long-chain-fatty-acid--CoA/3-oxocholest-4-en-26-oate--CoA ligase from Mycolicibacterium smegmatis (strain ATCC 700084 / mc(2)155) (Mycobacterium smegmatis).